A 74-amino-acid chain; its full sequence is MKPEIHPDYHTIKVVMTDGTEYFTRSTYGAEGDTLNLDIDSKSHPAWTGGTQQILDRGGRVSRFQKKFSGFLKK.

This sequence belongs to the bacterial ribosomal protein bL31 family. Type A subfamily. In terms of assembly, part of the 50S ribosomal subunit.

Binds the 23S rRNA. The polypeptide is Large ribosomal subunit protein bL31 (Afipia carboxidovorans (strain ATCC 49405 / DSM 1227 / KCTC 32145 / OM5) (Oligotropha carboxidovorans)).